A 121-amino-acid polypeptide reads, in one-letter code: UPF0102 protein BHWA1_02005 (121 aa).

It belongs to the UPF0102 family.

This chain is UPF0102 protein BHWA1_02005, found in Brachyspira hyodysenteriae (strain ATCC 49526 / WA1).